Here is a 317-residue protein sequence, read N- to C-terminus: Beta-ketoacyl-[acyl-carrier-protein] synthase III (317 aa).

Active-site residues include Cys112 and His244. An ACP-binding region spans residues 245–249 (QANLR). Residue Asn274 is part of the active site.

Belongs to the thiolase-like superfamily. FabH family. Homodimer.

It localises to the cytoplasm. The catalysed reaction is malonyl-[ACP] + acetyl-CoA + H(+) = 3-oxobutanoyl-[ACP] + CO2 + CoA. It functions in the pathway lipid metabolism; fatty acid biosynthesis. In terms of biological role, catalyzes the condensation reaction of fatty acid synthesis by the addition to an acyl acceptor of two carbons from malonyl-ACP. Catalyzes the first condensation reaction which initiates fatty acid synthesis and may therefore play a role in governing the total rate of fatty acid production. Possesses both acetoacetyl-ACP synthase and acetyl transacylase activities. Its substrate specificity determines the biosynthesis of branched-chain and/or straight-chain of fatty acids. This is Beta-ketoacyl-[acyl-carrier-protein] synthase III from Shigella sonnei (strain Ss046).